Here is a 348-residue protein sequence, read N- to C-terminus: Trace amine-associated receptor 9 (348 aa).

The Extracellular segment spans residues 1 to 33 (MTSDFSPEPPMELCYENVNGSCIKSSYAPWPRA). Asn-19 carries an N-linked (GlcNAc...) asparagine glycan. 2 disulfides stabilise this stretch: Cys-22-Cys-186 and Cys-105-Cys-190. The chain crosses the membrane as a helical span at residues 34–58 (ILYGVLGLGALLAVFGNLLVIIAIL). Topologically, residues 59 to 68 (HFKQLHTPTN) are cytoplasmic. Residues 69–90 (FLVASLACADFLVGVTVMPFST) traverse the membrane as a helical segment. Residues 91–105 (VRSVESCWYFGESYC) lie on the Extracellular side of the membrane. Residues 106 to 128 (KFHTCFDTSFCFASLFHLCCISI) traverse the membrane as a helical segment. Positions 112 and 113 each coordinate spermidine. Residues 129–148 (DRYIAVTDPLTYPTKFTVSV) are Cytoplasmic-facing. The helical transmembrane segment at 149–170 (SGLCIALSWFFSVTYSFSIFYT) threads the bilayer. The Extracellular segment spans residues 171-196 (GANEEGIEELVVALTCVGGCQAPLNQ). Positions 174-187 (EEGIEELVVALTCV) are extracellular Loop 2 (ECL2). Residues 197–218 (NWVLLCFLLFFLPTVVMVFLYG) traverse the membrane as a helical segment. Topologically, residues 219 to 256 (RIFLVAKYQARKIEGTANQAQASSESYKERVAKRERKA) are cytoplasmic. The helical transmembrane segment at 257 to 280 (AKTLGIAMAAFLVSWLPYIIDAVI) threads the bilayer. The Extracellular portion of the chain corresponds to 281 to 293 (DAYMNFITPAYVY). Residues 294–314 (EILVWCVYYNSAMNPLIYAFF) form a helical membrane-spanning segment. The Cytoplasmic segment spans residues 315–348 (YPWFRKAIKLIVSGKVFRADSSTTNLFSEEAGAG).

The protein belongs to the G-protein coupled receptor 1 family. As to expression, specifically expressed in neurons of the olfactory epithelium.

The protein resides in the cell membrane. Its function is as follows. Olfactory receptor specific for trace amines, such as triethylamine, N,N-dimethylcyclohexylamine (DMCHA), beta-phenylethylamine (beta-PEA), cadaverine (CAD) and polyamines such as spermine and spermidine. Trace amine compounds are enriched in animal body fluids and act on trace amine-associated receptors (TAARs) to elicit both intraspecific and interspecific innate behaviors. Trace amine-binding causes a conformation change that triggers signaling via G(s)-class of G alpha proteins (GNAL or GNAS). In mature olfactory sensory neurons, Taar9 is coupled with GNAL/G(olf)G alpha protein and mediates activation of adenylate cyclase activity to activate cAMP signaling and eventually transmit odorant signals to achieve membrane depolarization. In immature olfactory sensory neurons, Taar9 is coupled with GNAS/G(s) G alpha proteins. This Mus musculus (Mouse) protein is Trace amine-associated receptor 9.